The primary structure comprises 65 residues: Large ribosomal subunit protein bL31 (65 aa).

Cysteine 16, cysteine 18, cysteine 36, and cysteine 39 together coordinate Zn(2+).

This sequence belongs to the bacterial ribosomal protein bL31 family. Type A subfamily. As to quaternary structure, part of the 50S ribosomal subunit. Requires Zn(2+) as cofactor.

Its function is as follows. Binds the 23S rRNA. This Geotalea uraniireducens (strain Rf4) (Geobacter uraniireducens) protein is Large ribosomal subunit protein bL31.